The sequence spans 393 residues: S-adenosylmethionine synthase 2 (393 aa).

A Mg(2+)-binding site is contributed by Glu-9. His-15 contacts ATP. Residue Glu-43 coordinates K(+). Positions 56 and 99 each coordinate L-methionine. Residues 167 to 169 (DGK), 235 to 238 (SGRF), Asp-246, 252 to 253 (RK), Ala-269, Lys-273, and Lys-277 each bind ATP. Asp-246 provides a ligand contact to L-methionine. Position 277 (Lys-277) interacts with L-methionine.

It belongs to the AdoMet synthase family. In terms of assembly, homotetramer. The cofactor is Mn(2+). Requires Mg(2+) as cofactor. Co(2+) serves as cofactor. It depends on K(+) as a cofactor. NH4(+) is required as a cofactor. In terms of tissue distribution, mostly expressed in roots, and, to a lower extent, in hypocotyls and cotyledons.

It is found in the cytoplasm. It carries out the reaction L-methionine + ATP + H2O = S-adenosyl-L-methionine + phosphate + diphosphate. It participates in amino-acid biosynthesis; S-adenosyl-L-methionine biosynthesis; S-adenosyl-L-methionine from L-methionine: step 1/1. With respect to regulation, inhibited by products of SAMS reaction (SAM, Pi, PPi), substrate analogs (cycloleucine and ethionine), and alternative nucleotides (GTP, CTP and ADP). Strongly repressed by PPPi. In terms of biological role, catalyzes the formation of S-adenosylmethionine from methionine and ATP. The reaction comprises two steps that are both catalyzed by the same enzyme: formation of S-adenosylmethionine (AdoMet) and triphosphate, and subsequent hydrolysis of the triphosphate. The chain is S-adenosylmethionine synthase 2 (SAMS2) from Catharanthus roseus (Madagascar periwinkle).